Reading from the N-terminus, the 263-residue chain is Imidazole glycerol phosphate synthase subunit HisF (263 aa).

Catalysis depends on residues Asp22 and Asp141.

The protein belongs to the HisA/HisF family. Heterodimer of HisH and HisF.

The protein localises to the cytoplasm. The catalysed reaction is 5-[(5-phospho-1-deoxy-D-ribulos-1-ylimino)methylamino]-1-(5-phospho-beta-D-ribosyl)imidazole-4-carboxamide + L-glutamine = D-erythro-1-(imidazol-4-yl)glycerol 3-phosphate + 5-amino-1-(5-phospho-beta-D-ribosyl)imidazole-4-carboxamide + L-glutamate + H(+). It participates in amino-acid biosynthesis; L-histidine biosynthesis; L-histidine from 5-phospho-alpha-D-ribose 1-diphosphate: step 5/9. IGPS catalyzes the conversion of PRFAR and glutamine to IGP, AICAR and glutamate. The HisF subunit catalyzes the cyclization activity that produces IGP and AICAR from PRFAR using the ammonia provided by the HisH subunit. The polypeptide is Imidazole glycerol phosphate synthase subunit HisF (Clavibacter michiganensis subsp. michiganensis (strain NCPPB 382)).